Reading from the N-terminus, the 229-residue chain is 2,3-bisphosphoglycerate-dependent phosphoglycerate mutase (229 aa).

Residues 7 to 14 (RHGQSEWN), 20 to 21 (TG), Arg-59, 86 to 89 (ERHY), Lys-97, 113 to 114 (RR), and 182 to 183 (GN) each bind substrate. The Tele-phosphohistidine intermediate role is filled by His-8. Residue Glu-86 is the Proton donor/acceptor of the active site.

The protein belongs to the phosphoglycerate mutase family. BPG-dependent PGAM subfamily.

It catalyses the reaction (2R)-2-phosphoglycerate = (2R)-3-phosphoglycerate. The protein operates within carbohydrate degradation; glycolysis; pyruvate from D-glyceraldehyde 3-phosphate: step 3/5. In terms of biological role, catalyzes the interconversion of 2-phosphoglycerate and 3-phosphoglycerate. The sequence is that of 2,3-bisphosphoglycerate-dependent phosphoglycerate mutase from Listeria monocytogenes serotype 4b (strain F2365).